Reading from the N-terminus, the 510-residue chain is UDP-N-acetylmuramoylalanine--D-glutamate ligase (510 aa).

138 to 144 (GTNGKTT) is a binding site for ATP. The segment at 294 to 316 (FDEPAPAPRRKKDAPPPTRAGGR) is disordered.

It belongs to the MurCDEF family.

It localises to the cytoplasm. The catalysed reaction is UDP-N-acetyl-alpha-D-muramoyl-L-alanine + D-glutamate + ATP = UDP-N-acetyl-alpha-D-muramoyl-L-alanyl-D-glutamate + ADP + phosphate + H(+). It functions in the pathway cell wall biogenesis; peptidoglycan biosynthesis. Cell wall formation. Catalyzes the addition of glutamate to the nucleotide precursor UDP-N-acetylmuramoyl-L-alanine (UMA). This is UDP-N-acetylmuramoylalanine--D-glutamate ligase from Bordetella pertussis (strain Tohama I / ATCC BAA-589 / NCTC 13251).